The primary structure comprises 651 residues: MHLATGLAVALPFIGAASAQYFPPPVEGVTVVESKFDKNVKITYKENDICETTEGVRSFTGHVHLPPNNNDFGVNQNYSINTFFWFFEAREDPKNAPLSIWLNGGPGSSSMIGLFQENGPCMVNNDSNSTTNNPYSWNNKVNMLYIDQPNQVGFSYDVPTNVTVNPINDEVTVADFSNGVPEQNNTLLVGTLGSQNPYATANNTQNAARSIWHFAQVWFQEFPEYKPNNDKVSIWTESYGGRYGPAFTSYFQEQNEKIKNHTITEEGEMHILHLDTVGIINGCVDLMEQATSYPDFAYNNTYGIKAYNQSQYDSMINEFYRTGGCRDQLIHCRDVAAESDPHFYSHNETVNKICNDAGDFCGQKLEDAFESANLGFYDIAHPLNDPFPPQFYKGYLSQAHVLADMGMPVNFSQASDAVWKAFHTVGDYGRGDVRGYIDDLAYLLENGIKVALVYGDRDYICNWFGGEKVSLALNYTGTENFHKAGYTDVKVNSQVGGQVRQYGNFSFTRVYEAGHEVPAYQPEVSLEIFHRIMFNKDIATGEIDIAQKPDYSTTGTADTFHIKNDIPPEPEPTCYVLSMGRTCSEEQVKAVKDGTAVVENYIVKSPAGKKQGPPPTSTSPPSPTSSSEGSVKEFSVSVLGVSVLAAITFFL.

The signal sequence occupies residues 1–19 (MHLATGLAVALPFIGAASA). Residues Cys-50 and Cys-121 are joined by a disulfide bond. Asn-77, Asn-125, Asn-128, Asn-161, Asn-184, and Asn-202 each carry an N-linked (GlcNAc...) asparagine glycan. The active site involves Ser-238. Residues Asn-260, Asn-299, Asn-308, Asn-347, and Asn-410 are each glycosylated (N-linked (GlcNAc...) asparagine). 2 cysteine pairs are disulfide-bonded: Cys-325-Cys-361 and Cys-332-Cys-354. Asp-458 is an active-site residue. Cys-461 is a substrate binding site. N-linked (GlcNAc...) asparagine glycans are attached at residues Asn-474 and Asn-504. His-515 is an active-site residue. Position 516 (Glu-516) interacts with substrate. The segment at 604–630 (KSPAGKKQGPPPTSTSPPSPTSSSEGS) is disordered. The segment covering 612-623 (GPPPTSTSPPSP) has biased composition (pro residues). A lipid anchor (GPI-anchor amidated serine) is attached at Ser-625. The propeptide at 626 to 651 (SSEGSVKEFSVSVLGVSVLAAITFFL) is removed in mature form.

It belongs to the peptidase S10 family.

The protein resides in the cell membrane. The enzyme catalyses Preferential release of a C-terminal arginine or lysine residue.. Its function is as follows. Extracellular serine carboxypeptidase that contributes to pathogenicity. The chain is Carboxypeptidase S1 homolog A (SCPA) from Arthroderma otae (strain ATCC MYA-4605 / CBS 113480) (Microsporum canis).